The primary structure comprises 510 residues: GMP synthase [glutamine-hydrolyzing] (510 aa).

Residues 5–195 (TVVVLDFGGQ…LFEICGLRGD (191 aa)) enclose the Glutamine amidotransferase type-1 domain. Residue Cys-82 is the Nucleophile of the active site. Catalysis depends on residues His-169 and Glu-171. A GMPS ATP-PPase domain is found at 196–385 (WDLSDFISEA…LGIPAEILWR (190 aa)). 223 to 229 (SGGVDSS) serves as a coordination point for ATP.

In terms of assembly, homodimer.

It carries out the reaction XMP + L-glutamine + ATP + H2O = GMP + L-glutamate + AMP + diphosphate + 2 H(+). It participates in purine metabolism; GMP biosynthesis; GMP from XMP (L-Gln route): step 1/1. Functionally, catalyzes the synthesis of GMP from XMP. This Syntrophomonas wolfei subsp. wolfei (strain DSM 2245B / Goettingen) protein is GMP synthase [glutamine-hydrolyzing].